The following is a 220-amino-acid chain: Ras-related protein Rab-3A (220 aa).

Residues S31, S32, V33, G34, K35, T36, S37, T48, P49, S53, and T54 each coordinate GTP. A Mg(2+)-binding site is contributed by T36. Positions 49-58 (PAFVSTVGID) match the Switch 1 motif. Residues T54 and D77 each coordinate Mg(2+). G80 provides a ligand contact to GTP. The Switch 2 motif lies at 80–96 (GQERYRTITTAYYRGAM). At T86 the chain carries Phosphothreonine; by LRRK2. The GTP site is built by N135, K136, D138, A166, and K167. 2 positions are modified to phosphoserine: S188 and S190. The tract at residues 194–220 (ADPAVTGAKQGPQLSDQQVPPHQDCAC) is disordered. Residues C218 and C220 are each lipidated (S-geranylgeranyl cysteine). A Cysteine methyl ester modification is found at C220.

Belongs to the small GTPase superfamily. Rab family. In terms of assembly, interacts with RIMS1 and RIMS2. Interacts with Rabphilin-3A/RPH3A and Rab effector Noc2/RPH3AL. Interacts with SYTL4. Interacts with RAB3IP. Interacts with SGSM1 and SGSM3. Interacts with SYT1. Interacts with MYH9; this interaction is essential for lysosome exocytosis and plasma membrane repair. Interacts with STXBP1; this interaction promotes RAB3A dissociation from the vesicle membrane. Interacts with SNCA. The GTP-bound form interacts with REP15. Interacts with GDI1, GDI2, CHM and CHML; phosphorylation at Thr-86 disrupts these interactions. Interacts with MADD (via uDENN domain); the GTP-bound form is preferred for interaction. Mg(2+) is required as a cofactor. In terms of processing, phosphorylation of Thr-86 in the switch II region by LRRK2 prevents the association of RAB regulatory proteins, including CHM, CHML and RAB GDP dissociation inhibitors GDI1 and GDI2. As to expression, specifically expressed in brain.

The protein localises to the cytoplasm. The protein resides in the cytosol. It localises to the lysosome. Its subcellular location is the cytoplasmic vesicle. It is found in the secretory vesicle. The protein localises to the cell projection. The protein resides in the axon. It localises to the cell membrane. Its subcellular location is the presynapse. It is found in the postsynapse. It catalyses the reaction GTP + H2O = GDP + phosphate + H(+). With respect to regulation, regulated by guanine nucleotide exchange factors (GEFs) including RAB3IL1 and MADD which promote the exchange of bound GDP for free GTP. Regulated by GTPase activating proteins (GAPs) including RAB3GAP1 and TBC1D10B which increase the GTP hydrolysis activity. Inhibited by GDP dissociation inhibitors (GDIs) which prevent Rab-GDP dissociation. In terms of biological role, the small GTPases Rab are key regulators of intracellular membrane trafficking, from the formation of transport vesicles to their fusion with membranes. Rabs cycle between an inactive GDP-bound form and an active GTP-bound form that is able to recruit to membranes different sets of downstream effectors directly responsible for vesicle formation, movement, tethering and fusion. RAB3A plays a central role in regulated exocytosis and secretion. Controls the recruitment, tethering and docking of secretory vesicles to the plasma membrane. Upon stimulation, switches to its active GTP-bound form, cycles to vesicles and recruits effectors such as RIMS1, RIMS2, Rabphilin-3A/RPH3A, RPH3AL or SYTL4 to help the docking of vesicules onto the plasma membrane. Upon GTP hydrolysis by GTPase-activating protein, dissociates from the vesicle membrane allowing the exocytosis to proceed. Stimulates insulin secretion through interaction with RIMS2 or RPH3AL effectors in pancreatic beta cells. Regulates calcium-dependent lysosome exocytosis and plasma membrane repair (PMR) via the interaction with 2 effectors, SYTL4 and myosin-9/MYH9. Acts as a positive regulator of acrosome content secretion in sperm cells by interacting with RIMS1. Also plays a role in the regulation of dopamine release by interacting with synaptotagmin I/SYT. The polypeptide is Ras-related protein Rab-3A (Homo sapiens (Human)).